The primary structure comprises 625 residues: RalA-binding protein 1 (625 aa).

Composition is skewed to basic and acidic residues over residues 1 to 11 and 20 to 60; these read MDFDSPEEKEF and ADAK…KDRG. The segment at 1–172 is disordered; it reads MDFDSPEEKE…SKQLSQQQDD (172 aa). Phosphoserine is present on residues Ser68 and Ser69. The span at 94 to 157 shows a compositional bias: basic and acidic residues; it reads KSKEKREKSR…EKDKKADKKD (64 aa). Positions 191 to 385 constitute a Rho-GAP domain; that stretch reads VSLATERSRC…PLTSTSPKLP (195 aa). The segment at 443-500 is disordered; sequence QEKTAEEVDNSSSAPPAVASEDTTDSKPAGTPAVSTNNSISQEEPKTDTLTPKDAPND. Positions 475 to 484 are enriched in polar residues; the sequence is AVSTNNSISQ.

Interacts with CycB and numb.

Its function is as follows. Participates in receptor endocytosis during interphase, is also involved in mitotic processes when endocytosis is switched off. The chain is RalA-binding protein 1 from Drosophila melanogaster (Fruit fly).